A 208-amino-acid polypeptide reads, in one-letter code: Putative ribosomal protein uS2-like (208 aa).

Belongs to the universal ribosomal protein uS2 family.

Its subcellular location is the plastid. It localises to the chloroplast. The sequence is that of Putative ribosomal protein uS2-like (rps2-2) from Chlamydomonas reinhardtii (Chlamydomonas smithii).